Consider the following 198-residue polypeptide: Ribose 1,5-bisphosphate phosphokinase PhnN (198 aa).

ATP is bound at residue 25 to 32 (GPSGAGKD).

This sequence belongs to the ribose 1,5-bisphosphokinase family.

It carries out the reaction alpha-D-ribose 1,5-bisphosphate + ATP = 5-phospho-alpha-D-ribose 1-diphosphate + ADP. It participates in metabolic intermediate biosynthesis; 5-phospho-alpha-D-ribose 1-diphosphate biosynthesis; 5-phospho-alpha-D-ribose 1-diphosphate from D-ribose 5-phosphate (route II): step 3/3. In terms of biological role, catalyzes the phosphorylation of ribose 1,5-bisphosphate to 5-phospho-D-ribosyl alpha-1-diphosphate (PRPP). This Bradyrhizobium diazoefficiens (strain JCM 10833 / BCRC 13528 / IAM 13628 / NBRC 14792 / USDA 110) protein is Ribose 1,5-bisphosphate phosphokinase PhnN.